The primary structure comprises 647 residues: 2',3'-cyclic-nucleotide 2'-phosphodiesterase/3'-nucleotidase (647 aa).

Positions 1–19 are cleaved as a signal peptide; it reads MIKFSATLLATLIAASVNA. A divalent metal cation is bound by residues D31, H33, D76, N116, H225, H257, and H259. Residues Y440 and 544–550 contribute to the substrate site; that span reads YRAYGGK.

This sequence belongs to the 5'-nucleotidase family. A divalent metal cation is required as a cofactor.

The protein localises to the periplasm. The enzyme catalyses a nucleoside 2',3'-cyclic phosphate + H2O = a nucleoside 3'-phosphate + H(+). It catalyses the reaction a ribonucleoside 3'-phosphate + H2O = a ribonucleoside + phosphate. Its function is as follows. This bifunctional enzyme catalyzes two consecutive reactions during ribonucleic acid degradation. Converts a 2',3'-cyclic nucleotide to a 3'-nucleotide and then the 3'-nucleotide to the corresponding nucleoside and phosphate. This is 2',3'-cyclic-nucleotide 2'-phosphodiesterase/3'-nucleotidase (cpdB) from Salmonella typhimurium (strain LT2 / SGSC1412 / ATCC 700720).